Here is a 292-residue protein sequence, read N- to C-terminus: Tetratricopeptide repeat protein 1 (292 aa).

Residues 23–125 (TQEAECAGPP…STRLKEEGNE (103 aa)) form a disordered region. 2 stretches are compositionally biased toward basic and acidic residues: residues 45–55 (LLRDDEAHLQE) and 75–85 (GADKVENKSNE). Phosphoserine is present on residues serine 83 and serine 90. A compositionally biased stretch (basic and acidic residues) spans 99–125 (ELEKNMSDEEKQKRREESTRLKEEGNE). TPR repeat units lie at residues 116-149 (STRLKEEGNEQFKKGDYIEAESSYSRALEMCPSC), 155-188 (SILFSNRAAARMKQDKKEMAINDCSKAIQLNPSY), and 189-222 (IRAILRRAELYEKTDKLDEALEDYKSILEKDPSI).

Interacts with the GAP domain of NF1. Interacts (via TPR repeats) with HSP90AA1 and HSPA8.

The polypeptide is Tetratricopeptide repeat protein 1 (TTC1) (Homo sapiens (Human)).